The primary structure comprises 142 residues: Lipoprotein MlpI (142 aa).

A signal peptide spans 1–17 (MKIINILFCLFLLMLNS). A lipid anchor (N-palmitoyl cysteine) is attached at C18. Residue C18 is the site of S-diacylglycerol cysteine attachment. The disordered stretch occupies residues 22-54 (DTNTSQTKSRQKRDLTQKEATQEKPKSKEDLLR). Residues 33-54 (KRDLTQKEATQEKPKSKEDLLR) are compositionally biased toward basic and acidic residues.

This sequence belongs to the Multicopy lipoprotein (Mlp) family.

The protein localises to the cell outer membrane. In terms of biological role, an outer membrane protein that may participate in pathogenesis. Some human Lyme disease patients have antibodies against this protein. The Mlp proteins probably undergo intragenic recombination, generating new alleles. The sequence is that of Lipoprotein MlpI from Borreliella burgdorferi (strain ATCC 35210 / DSM 4680 / CIP 102532 / B31) (Borrelia burgdorferi).